A 370-amino-acid chain; its full sequence is Protein-glutamate methylesterase/protein-glutamine glutaminase of group 1 operon (370 aa).

In terms of domain architecture, Response regulatory spans 4–121; that stretch reads KVLVVDDSGF…SRNPDKVKQL (118 aa). Asp55 is modified (4-aspartylphosphate). Over residues 150-180 the composition is skewed to low complexity; it reads PASTFTSQAQTRPAAPARAAAPTPAASQSPA. The interval 150-183 is disordered; sequence PASTFTSQAQTRPAAPARAAAPTPAASQSPAPKR. Positions 179–370 constitute a CheB-type methylesterase domain; the sequence is PAPKRKPYKL…IGKHLVEACV (192 aa). Catalysis depends on residues Ser194, His221, and Asp314.

The protein belongs to the CheB family. In terms of processing, phosphorylated by CheA. Phosphorylation of the N-terminal regulatory domain activates the methylesterase activity.

Its subcellular location is the cytoplasm. The enzyme catalyses [protein]-L-glutamate 5-O-methyl ester + H2O = L-glutamyl-[protein] + methanol + H(+). The catalysed reaction is L-glutaminyl-[protein] + H2O = L-glutamyl-[protein] + NH4(+). In terms of biological role, involved in chemotaxis. Part of a chemotaxis signal transduction system that modulates chemotaxis in response to various stimuli. Catalyzes the demethylation of specific methylglutamate residues introduced into the chemoreceptors (methyl-accepting chemotaxis proteins or MCP) by CheR. Also mediates the irreversible deamidation of specific glutamine residues to glutamic acid. This chain is Protein-glutamate methylesterase/protein-glutamine glutaminase of group 1 operon, found in Pseudomonas putida (strain ATCC 47054 / DSM 6125 / CFBP 8728 / NCIMB 11950 / KT2440).